A 193-amino-acid polypeptide reads, in one-letter code: Naphthalene 1,2-dioxygenase system, small oxygenase component (193 aa).

The protein belongs to the bacterial ring-hydroxylating dioxygenase beta subunit family. In terms of assembly, the naphthalene dioxygenase (NDO) multicomponent enzyme system is composed of an electron transfer component and a dioxygenase component (iron sulfur protein (ISP)). The electron transfer component is composed of a ferredoxin reductase (NdoR) and a ferredoxin (NdoA), and the dioxygenase component is formed of a heterohexamer (trimer of heterodimers) of three large alpha subunits (NdoB) and three small beta subunits (NdoC).

It participates in aromatic compound metabolism; naphthalene degradation. Its function is as follows. Component of the naphthalene dioxygenase (NDO) multicomponent enzyme system which catalyzes the incorporation of both atoms of molecular oxygen into naphthalene to form cis-(1R,2S)-dihydroxy-1,2-dihydronaphthalene. The beta subunit seems to have a structural role in the holoenzyme. This Pseudomonas aeruginosa protein is Naphthalene 1,2-dioxygenase system, small oxygenase component.